We begin with the raw amino-acid sequence, 372 residues long: N-methyl-L-tryptophan oxidase (372 aa).

An FAD-binding site is contributed by 4-34; the sequence is DLIIIGSGSVGAAAGYYATRAGLNVLMTDAH. C308 is subject to S-8alpha-FAD cysteine.

The protein belongs to the MSOX/MTOX family. MTOX subfamily. As to quaternary structure, monomer. The cofactor is FAD.

The enzyme catalyses N(alpha)-methyl-L-tryptophan + O2 + H2O = L-tryptophan + formaldehyde + H2O2. In terms of biological role, catalyzes the oxidative demethylation of N-methyl-L-tryptophan. This chain is N-methyl-L-tryptophan oxidase, found in Escherichia coli O81 (strain ED1a).